We begin with the raw amino-acid sequence, 207 residues long: Claudin-11 (207 aa).

Met1 is a topological domain (cytoplasmic). A helical membrane pass occupies residues 2-22; it reads VATCLQVVGFVTSFVGWIGVI. The Extracellular portion of the chain corresponds to 23-82; sequence VTTSTNDWVVTCGYTIPTCRKLDELGSKGLWADCVMATGLYHCKPLVDILILPGYVQACR. A helical transmembrane segment spans residues 83-103; the sequence is ALMIAASVLGLPAILLLLTVL. Residues 104–122 lie on the Cytoplasmic side of the membrane; the sequence is PCIRMGHEPGVAKYRRAQL. The helical transmembrane segment at 123-143 threads the bilayer; that stretch reads AGVLLILLALCAIVATIWFPV. At 144-157 the chain is on the extracellular side; sequence CAHRETTIVSFGYS. The chain crosses the membrane as a helical span at residues 158–178; sequence LYAGWIGAVLCLVGGCVILCC. Topologically, residues 179 to 207 are cytoplasmic; it reads AGDAQAFGENRFYYSSGSSSPTHAKSAHV. Residues Ser193, Ser194, Ser197, and Ser198 each carry the phosphoserine modification.

This sequence belongs to the claudin family. Interacts with tetraspanin-3/TSPAN3. Interacts with OCLN.

The protein localises to the cell junction. It is found in the tight junction. The protein resides in the cell membrane. Plays a major role in tight junction-specific obliteration of the intercellular space, through calcium-independent cell-adhesion activity. This Macaca fascicularis (Crab-eating macaque) protein is Claudin-11 (CLDN11).